Here is a 107-residue protein sequence, read N- to C-terminus: ATPase inhibitor, mitochondrial (107 aa).

A mitochondrion-targeting transit peptide spans 1 to 25; the sequence is MAGSALAVRARLGVWGMRVLQTRGF. Residues 25 to 58 form a disordered region; sequence FGSDSSESMDSGAGSIREAGGAFGKREKAEEDRY. Residues 26–52 are N-terminal inhibitory region; the sequence is GSDSSESMDSGAGSIREAGGAFGKREK. Ser39 carries the phosphoserine modification. Residues 48-58 are compositionally biased toward basic and acidic residues; that stretch reads GKREKAEEDRY. Positions 60–107 form a coiled coil; sequence REKTREQLAALKKHHEDEIDHHSKEIERLQKQIERHKKKIKYLKNSEH. An antiparallel alpha-helical coiled coil region region spans residues 74 to 106; it reads HEDEIDHHSKEIERLQKQIERHKKKIKYLKNSE. Residue Lys103 is modified to N6-succinyllysine.

Belongs to the ATPase inhibitor family. In terms of assembly, homodimer; represents the active form and is present at a pH value below 6.5. Homotetramer; represents the inactive form and is present at a pH value above 7.0.

The protein resides in the mitochondrion. Endogenous F(1)F(o)-ATPase inhibitor limiting ATP depletion when the mitochondrial membrane potential falls below a threshold and the F(1)F(o)-ATP synthase starts hydrolyzing ATP to pump protons out of the mitochondrial matrix. Required to avoid the consumption of cellular ATP when the F(1)F(o)-ATP synthase enzyme acts as an ATP hydrolase. Indirectly acts as a regulator of heme synthesis in erythroid tissues: regulates heme synthesis by modulating the mitochondrial pH and redox potential, allowing FECH to efficiently catalyze the incorporation of iron into protoporphyrin IX to produce heme. The sequence is that of ATPase inhibitor, mitochondrial from Rattus norvegicus (Rat).